A 220-amino-acid polypeptide reads, in one-letter code: Deoxyribose-phosphate aldolase (220 aa).

The Proton donor/acceptor role is filled by Asp-89. Lys-151 functions as the Schiff-base intermediate with acetaldehyde in the catalytic mechanism. Lys-180 serves as the catalytic Proton donor/acceptor.

The protein belongs to the DeoC/FbaB aldolase family. DeoC type 1 subfamily.

Its subcellular location is the cytoplasm. The catalysed reaction is 2-deoxy-D-ribose 5-phosphate = D-glyceraldehyde 3-phosphate + acetaldehyde. Its pathway is carbohydrate degradation; 2-deoxy-D-ribose 1-phosphate degradation; D-glyceraldehyde 3-phosphate and acetaldehyde from 2-deoxy-alpha-D-ribose 1-phosphate: step 2/2. Functionally, catalyzes a reversible aldol reaction between acetaldehyde and D-glyceraldehyde 3-phosphate to generate 2-deoxy-D-ribose 5-phosphate. This Mycoplasmopsis pulmonis (strain UAB CTIP) (Mycoplasma pulmonis) protein is Deoxyribose-phosphate aldolase.